A 420-amino-acid chain; its full sequence is Probable pectate lyase C (420 aa).

The N-terminal stretch at 1-20 (MKLSAPLLVSLAAFSQAVTA) is a signal peptide. Asn-49, Asn-165, and Asn-202 each carry an N-linked (GlcNAc...) asparagine glycan. The active site involves Arg-205. The region spanning 262–297 (NANFHGYVQNNYYDPDKDGQLDGFELGVSSSNYGGV) is the EF-hand domain. Ca(2+)-binding residues include Asp-275, Asp-277, Asp-279, Gln-281, and Glu-286. Residues 358-396 (TMGGPGTLNGGTPAKDTDGDGIPDEAEKQLGTDPNTNDS) form a disordered region. Residue Asn-394 is glycosylated (N-linked (GlcNAc...) asparagine).

The protein belongs to the polysaccharide lyase 1 family. The cofactor is Ca(2+).

It is found in the secreted. It carries out the reaction Eliminative cleavage of (1-&gt;4)-alpha-D-galacturonan to give oligosaccharides with 4-deoxy-alpha-D-galact-4-enuronosyl groups at their non-reducing ends.. Its function is as follows. Pectinolytic enzyme consist of four classes of enzymes: pectin lyase, polygalacturonase, pectin methylesterase and rhamnogalacturonase. Among pectinolytic enzymes, pectin lyase is the most important in depolymerization of pectin, since it cleaves internal glycosidic bonds of highly methylated pectins. Favors pectate, the anion, over pectin, the methyl ester. In Aspergillus fumigatus (strain CBS 144.89 / FGSC A1163 / CEA10) (Neosartorya fumigata), this protein is Probable pectate lyase C (plyC).